Consider the following 1093-residue polypeptide: ATP-dependent helicase/deoxyribonuclease subunit B (1093 aa).

The protein belongs to the helicase family. AddB/RexB type 2 subfamily. As to quaternary structure, heterodimer of AddA and RexB. Mg(2+) serves as cofactor.

In terms of biological role, the heterodimer acts as both an ATP-dependent DNA helicase and an ATP-dependent, dual-direction single-stranded exonuclease. Recognizes the chi site generating a DNA molecule suitable for the initiation of homologous recombination. This subunit has 5' -&gt; 3' nuclease activity but not helicase activity. The protein is ATP-dependent helicase/deoxyribonuclease subunit B of Streptococcus sanguinis (strain SK36).